A 495-amino-acid polypeptide reads, in one-letter code: Cytochrome P450 monooxygenase 64 (495 aa).

Residues 2 to 22 (FLQIVTSVLATGLLYALISVL) traverse the membrane as a helical segment. Residues N25 and N198 are each glycosylated (N-linked (GlcNAc...) asparagine). Position 428 (C428) interacts with heme.

This sequence belongs to the cytochrome P450 family. It depends on heme as a cofactor.

Its subcellular location is the membrane. It functions in the pathway secondary metabolite biosynthesis. In terms of biological role, cytochrome P450 monooxygenase that is able to use 4-ethoxybenzoic acid as a substrate for oxidation. This chain is Cytochrome P450 monooxygenase 64, found in Postia placenta (strain ATCC 44394 / Madison 698-R) (Brown rot fungus).